The following is a 387-amino-acid chain: 3-ketoacyl-CoA thiolase (387 aa).

The Acyl-thioester intermediate role is filled by Cys-91. Catalysis depends on proton acceptor residues His-343 and Cys-373.

The protein belongs to the thiolase-like superfamily. Thiolase family. Heterotetramer of two alpha chains (FadB) and two beta chains (FadA).

It localises to the cytoplasm. It catalyses the reaction an acyl-CoA + acetyl-CoA = a 3-oxoacyl-CoA + CoA. It participates in lipid metabolism; fatty acid beta-oxidation. Its function is as follows. Catalyzes the final step of fatty acid oxidation in which acetyl-CoA is released and the CoA ester of a fatty acid two carbons shorter is formed. This is 3-ketoacyl-CoA thiolase from Vibrio vulnificus (strain YJ016).